Reading from the N-terminus, the 299-residue chain is Phosphatidylserine decarboxylase proenzyme (299 aa).

Active-site charge relay system; for autoendoproteolytic cleavage activity residues include Asp-115, His-171, and Ser-258. Residue Ser-258 is the Schiff-base intermediate with substrate; via pyruvic acid; for decarboxylase activity of the active site. Ser-258 carries the pyruvic acid (Ser); by autocatalysis modification.

Belongs to the phosphatidylserine decarboxylase family. PSD-B subfamily. Prokaryotic type II sub-subfamily. As to quaternary structure, heterodimer of a large membrane-associated beta subunit and a small pyruvoyl-containing alpha subunit. Requires pyruvate as cofactor. In terms of processing, is synthesized initially as an inactive proenzyme. Formation of the active enzyme involves a self-maturation process in which the active site pyruvoyl group is generated from an internal serine residue via an autocatalytic post-translational modification. Two non-identical subunits are generated from the proenzyme in this reaction, and the pyruvate is formed at the N-terminus of the alpha chain, which is derived from the carboxyl end of the proenzyme. The autoendoproteolytic cleavage occurs by a canonical serine protease mechanism, in which the side chain hydroxyl group of the serine supplies its oxygen atom to form the C-terminus of the beta chain, while the remainder of the serine residue undergoes an oxidative deamination to produce ammonia and the pyruvoyl prosthetic group on the alpha chain. During this reaction, the Ser that is part of the protease active site of the proenzyme becomes the pyruvoyl prosthetic group, which constitutes an essential element of the active site of the mature decarboxylase.

It localises to the cell membrane. The enzyme catalyses a 1,2-diacyl-sn-glycero-3-phospho-L-serine + H(+) = a 1,2-diacyl-sn-glycero-3-phosphoethanolamine + CO2. The protein operates within phospholipid metabolism; phosphatidylethanolamine biosynthesis; phosphatidylethanolamine from CDP-diacylglycerol: step 2/2. In terms of biological role, catalyzes the formation of phosphatidylethanolamine (PtdEtn) from phosphatidylserine (PtdSer). This Chlamydia felis (strain Fe/C-56) (Chlamydophila felis) protein is Phosphatidylserine decarboxylase proenzyme.